The sequence spans 444 residues: Tubulin beta-6 chain (444 aa).

GTP-binding residues include glutamine 11, glutamate 69, serine 138, glycine 142, threonine 143, glycine 144, asparagine 204, and asparagine 226. Residue glutamate 69 participates in Mg(2+) binding.

The protein belongs to the tubulin family. In terms of assembly, dimer of alpha and beta chains. A typical microtubule is a hollow water-filled tube with an outer diameter of 25 nm and an inner diameter of 15 nM. Alpha-beta heterodimers associate head-to-tail to form protofilaments running lengthwise along the microtubule wall with the beta-tubulin subunit facing the microtubule plus end conferring a structural polarity. Microtubules usually have 13 protofilaments but different protofilament numbers can be found in some organisms and specialized cells. Mg(2+) serves as cofactor. As to expression, expressed in roots, leaf sheaths, anthers, and suspension cultured cells.

It is found in the cytoplasm. Its subcellular location is the cytoskeleton. Tubulin is the major constituent of microtubules, a cylinder consisting of laterally associated linear protofilaments composed of alpha- and beta-tubulin heterodimers. Microtubules grow by the addition of GTP-tubulin dimers to the microtubule end, where a stabilizing cap forms. Below the cap, tubulin dimers are in GDP-bound state, owing to GTPase activity of alpha-tubulin. The polypeptide is Tubulin beta-6 chain (TUBB6) (Oryza sativa subsp. japonica (Rice)).